Reading from the N-terminus, the 384-residue chain is Guanine nucleotide-binding protein alpha-2 subunit (384 aa).

Residues methionine 1–alanine 23 form a disordered region. Glycine 2 carries the N-myristoyl glycine lipid modification. Cysteine 5 carries the S-palmitoyl cysteine lipid modification. In terms of domain architecture, G-alpha spans histidine 38–leucine 384. The tract at residues lysine 41–threonine 54 is G1 motif. 15 residues coordinate GTP: glutamate 49, serine 50, glycine 51, lysine 52, serine 53, threonine 54, aspartate 163, leucine 188, tyrosine 189, threonine 194, glycine 222, asparagine 288, lysine 289, aspartate 291, and alanine 356. Serine 53 contacts Mg(2+). A G2 motif region spans residues aspartate 186–threonine 194. Threonine 194 is a binding site for Mg(2+). Residues tyrosine 215–arginine 224 form a G3 motif region. The interval methionine 284 to aspartate 291 is G4 motif. The interval threonine 354–glutamine 359 is G5 motif.

The protein belongs to the G-alpha family. As to quaternary structure, g proteins are composed of 3 units; alpha, beta and gamma. The alpha chain contains the guanine nucleotide binding site. The cofactor is Mg(2+).

Its function is as follows. Guanine nucleotide-binding proteins (G proteins) are involved as modulators or transducers in various transmembrane signaling systems. The chain is Guanine nucleotide-binding protein alpha-2 subunit (GPA2) from Pisum sativum (Garden pea).